Reading from the N-terminus, the 187-residue chain is Hypoxanthine/guanine phosphoribosyltransferase (187 aa).

This sequence belongs to the purine/pyrimidine phosphoribosyltransferase family. Archaeal HPRT subfamily. In terms of assembly, homodimer.

It is found in the cytoplasm. It carries out the reaction IMP + diphosphate = hypoxanthine + 5-phospho-alpha-D-ribose 1-diphosphate. The enzyme catalyses GMP + diphosphate = guanine + 5-phospho-alpha-D-ribose 1-diphosphate. The protein operates within purine metabolism; IMP biosynthesis via salvage pathway; IMP from hypoxanthine: step 1/1. Functionally, catalyzes a salvage reaction resulting in the formation of IMP that is energically less costly than de novo synthesis. The sequence is that of Hypoxanthine/guanine phosphoribosyltransferase from Ferroglobus placidus (strain DSM 10642 / AEDII12DO).